The primary structure comprises 272 residues: Undecaprenyl-diphosphatase (272 aa).

A run of 8 helical transmembrane segments spans residues 4–24 (IHSL…EFLP), 45–65 (AETF…VMFW), 89–109 (LTLG…LVFH), 115–135 (LFNP…LIAA), 152–174 (TYRQ…FSRS), 189–209 (YAAS…ATAL), 225–245 (MFAV…KTFL), and 251–271 (ISFI…YVVF).

Belongs to the UppP family.

Its subcellular location is the cell inner membrane. The catalysed reaction is di-trans,octa-cis-undecaprenyl diphosphate + H2O = di-trans,octa-cis-undecaprenyl phosphate + phosphate + H(+). Catalyzes the dephosphorylation of undecaprenyl diphosphate (UPP). Confers resistance to bacitracin. This Citrobacter koseri (strain ATCC BAA-895 / CDC 4225-83 / SGSC4696) protein is Undecaprenyl-diphosphatase.